The following is a 417-amino-acid chain: Queuine tRNA-ribosyltransferase accessory subunit 2 (417 aa).

The Zn(2+) site is built by Cys-324, Cys-326, Cys-329, and His-355.

It belongs to the queuine tRNA-ribosyltransferase family. QTRT2 subfamily. As to quaternary structure, heterodimer of a catalytic subunit and an accessory subunit. Zn(2+) is required as a cofactor.

The protein localises to the cytoplasm. Functionally, non-catalytic subunit of the queuine tRNA-ribosyltransferase (TGT) that catalyzes the base-exchange of a guanine (G) residue with queuine (Q) at position 34 (anticodon wobble position) in tRNAs with GU(N) anticodons (tRNA-Asp, -Asn, -His and -Tyr), resulting in the hypermodified nucleoside queuosine (7-(((4,5-cis-dihydroxy-2-cyclopenten-1-yl)amino)methyl)-7-deazaguanosine). This is Queuine tRNA-ribosyltransferase accessory subunit 2 from Drosophila pseudoobscura pseudoobscura (Fruit fly).